Here is a 199-residue protein sequence, read N- to C-terminus: MGSVQDENKDEFKQSLTRGKLKPSSSSSFRLRSPSLNSIRLRRIFDVFDRNHDCLISVEELSQALNLLGLDADLSEIESMVKLHIKPENTGLRFEDFETLHRSLNDVFFGSKCEDKLGLNPDPAQDESDLKEAFDVFDENGDGFISAKELQVVLEKLGLPEGSEIDRVEMMISSVEQDHDGRVDFFEFKDMMRTVIVPS.

Residues 1 to 13 (MGSVQDENKDEFK) are compositionally biased toward basic and acidic residues. Residues 1-31 (MGSVQDENKDEFKQSLTRGKLKPSSSSSFRL) form a disordered region. EF-hand domains are found at residues 36 to 71 (LNSIRLRRIFDVFDRNHDCLISVEELSQALNLLGLD), 75 to 110 (SEIESMVKLHIKPENTGLRFEDFETLHRSLNDVFFG), 125 to 160 (QDESDLKEAFDVFDENGDGFISAKELQVVLEKLGLP), and 163 to 198 (SEIDRVEMMISSVEQDHDGRVDFFEFKDMMRTVIVP). 4 residues coordinate Ca(2+): aspartate 49, asparagine 51, aspartate 53, and glutamate 60. Positions 138, 140, 142, 149, 178, 180, 182, and 187 each coordinate Ca(2+).

Its function is as follows. Not known. Probably binds 3 calcium ions. This chain is Calcium-binding protein CAST, found in Solanum tuberosum (Potato).